Consider the following 259-residue polypeptide: ATP synthase subunit a (259 aa).

A run of 6 helical transmembrane segments spans residues 37–57, 101–121, 131–151, 157–177, 203–223, and 232–252; these read LSITNSTIWMWLAVAVAFLFM, YFPAIFTLFLLVLFCNLLGLI, LVVTATLALSVFFFATGLAIV, FIGFFVPSGVPPMLLILMVPI, VLAIMFFFAATLPLGGLLMPA, and FELFIGFIQAYIFTILTCVYI.

The protein belongs to the ATPase A chain family. In terms of assembly, F-type ATPases have 2 components, CF(1) - the catalytic core - and CF(0) - the membrane proton channel. CF(1) has five subunits: alpha(3), beta(3), gamma(1), delta(1), epsilon(1). CF(0) has three main subunits: a(1), b(2) and c(9-12). The alpha and beta chains form an alternating ring which encloses part of the gamma chain. CF(1) is attached to CF(0) by a central stalk formed by the gamma and epsilon chains, while a peripheral stalk is formed by the delta and b chains.

The protein localises to the cell inner membrane. Functionally, key component of the proton channel; it plays a direct role in the translocation of protons across the membrane. This chain is ATP synthase subunit a, found in Magnetococcus marinus (strain ATCC BAA-1437 / JCM 17883 / MC-1).